The sequence spans 809 residues: Glycerol-3-phosphate acyltransferase (809 aa).

The HXXXXD motif motif lies at 309 to 314; the sequence is HRSHMD.

This sequence belongs to the GPAT/DAPAT family.

It is found in the cell inner membrane. It carries out the reaction sn-glycerol 3-phosphate + an acyl-CoA = a 1-acyl-sn-glycero-3-phosphate + CoA. It participates in phospholipid metabolism; CDP-diacylglycerol biosynthesis; CDP-diacylglycerol from sn-glycerol 3-phosphate: step 1/3. This chain is Glycerol-3-phosphate acyltransferase, found in Shewanella oneidensis (strain ATCC 700550 / JCM 31522 / CIP 106686 / LMG 19005 / NCIMB 14063 / MR-1).